We begin with the raw amino-acid sequence, 556 residues long: 2-succinyl-5-enolpyruvyl-6-hydroxy-3-cyclohexene-1-carboxylate synthase (556 aa).

It belongs to the TPP enzyme family. MenD subfamily. As to quaternary structure, homodimer. Mg(2+) is required as a cofactor. It depends on Mn(2+) as a cofactor. Requires thiamine diphosphate as cofactor.

The enzyme catalyses isochorismate + 2-oxoglutarate + H(+) = 5-enolpyruvoyl-6-hydroxy-2-succinyl-cyclohex-3-ene-1-carboxylate + CO2. The protein operates within quinol/quinone metabolism; 1,4-dihydroxy-2-naphthoate biosynthesis; 1,4-dihydroxy-2-naphthoate from chorismate: step 2/7. It participates in quinol/quinone metabolism; menaquinone biosynthesis. Its function is as follows. Catalyzes the thiamine diphosphate-dependent decarboxylation of 2-oxoglutarate and the subsequent addition of the resulting succinic semialdehyde-thiamine pyrophosphate anion to isochorismate to yield 2-succinyl-5-enolpyruvyl-6-hydroxy-3-cyclohexene-1-carboxylate (SEPHCHC). The protein is 2-succinyl-5-enolpyruvyl-6-hydroxy-3-cyclohexene-1-carboxylate synthase of Salmonella dublin (strain CT_02021853).